Reading from the N-terminus, the 1122-residue chain is AP-4 complex subunit epsilon-1 (1122 aa).

S699 bears the Phosphoserine mark. Basic and acidic residues-rich tracts occupy residues 714–728 (YLPK…KPEA) and 745–760 (TTRK…STEE). 2 disordered regions span residues 714–760 (YLPK…STEE) and 797–861 (SKLK…AEKL). The tract at residues 726-1122 (PEASHVPAEG…CHCQKVMQTS (397 aa)) is interaction with TEPSIN. Over residues 841–853 (ELSSELFRSESLS) the composition is skewed to low complexity. A Phosphoserine modification is found at S851.

It belongs to the adaptor complexes large subunit family. As to quaternary structure, adaptor protein complex 4 (AP-4) is a heterotetramer composed of two large adaptins (epsilon-type subunit AP4E1 and beta-type subunit AP4B1), a medium adaptin (mu-type subunit AP4M1) and a small adaptin (sigma-type AP4S1). Interacts with TEPSIN. Interacts with GRIA2; probably indirect it mediates the somatodendritic localization of GRIA2 in neurons.

The protein localises to the golgi apparatus. It is found in the trans-Golgi network membrane. Component of the adaptor protein complex 4 (AP-4). Adaptor protein complexes are vesicle coat components involved both in vesicle formation and cargo selection. They control the vesicular transport of proteins in different trafficking pathways. AP-4 forms a non clathrin-associated coat on vesicles departing the trans-Golgi network (TGN) and may be involved in the targeting of proteins from the trans-Golgi network (TGN) to the endosomal-lysosomal system. It is also involved in protein sorting to the basolateral membrane in epithelial cells and the proper asymmetric localization of somatodendritic proteins in neurons. AP-4 is involved in the recognition and binding of tyrosine-based sorting signals found in the cytoplasmic part of cargos, but may also recognize other types of sorting signal. This Mus musculus (Mouse) protein is AP-4 complex subunit epsilon-1.